A 577-amino-acid polypeptide reads, in one-letter code: MFS-type transporter pgmG (577 aa).

A disordered region spans residues 1–32; it reads MSETVTQTETDQRPATARSLGAEEKEAKSDEQ. A compositionally biased stretch (basic and acidic residues) spans 21-31; that stretch reads GAEEKEAKSDE. 8 consecutive transmembrane segments (helical) span residues 45–65, 84–104, 111–131, 141–161, 174–194, 218–238, 259–279, and 292–312; these read FIVI…NTIV, WLSV…SKIY, WLYL…GAAP, ALAG…LSVN, TGLT…GFAV, PLTV…LFML, LGTI…NFGG, and CFVV…YCIG. Residue N317 is glycosylated (N-linked (GlcNAc...) asparagine). Residues 330 to 350 form a helical membrane-spanning segment; the sequence is FIILFVQTASVATVFFVPIYF. The N-linked (GlcNAc...) asparagine glycan is linked to N360. A run of 5 helical transmembrane segments spans residues 363 to 383, 395 to 415, 426 to 446, 457 to 477, and 532 to 552; these read AIDA…AMIL, MPWY…MYTI, GYMI…FAVA, VATG…LAIA, and ISQV…LAIF.

The protein belongs to the major facilitator superfamily. TCR/Tet family.

It localises to the membrane. Functionally, MFS-type transporter; part of the gene cluster that mediates the biosynthesis of pleosporalin A, ascomycone A, as well as a third cryptic naphthoquinone derived pigment, all responsible for the coloration of conidia. Seems not to be involved in pigment biosynthesis although its expression is regulated by the cluster-specific transcription factor pgmR. This Aspergillus terreus (strain NIH 2624 / FGSC A1156) protein is MFS-type transporter pgmG.